The following is a 72-amino-acid chain: Disintegrin sasaimin (72 aa).

Positions 1–72 (EAGEECDCGA…SAGCPRNPFH (72 aa)) constitute a Disintegrin domain. Intrachain disulfides connect Cys6–Cys21, Cys8–Cys16, Cys15–Cys38, Cys29–Cys35, Cys34–Cys59, and Cys47–Cys66. A Cell attachment site motif is present at residues 51–53 (RGD).

This sequence belongs to the venom metalloproteinase (M12B) family. P-II subfamily. P-IIa sub-subfamily. Monomer. Expressed by the venom gland.

The protein resides in the secreted. Its function is as follows. Inhibits ADP- (IC(50)=66 nM) and collagen-induced (IC(50)=100 nM) aggregation of human platelets. In vitro, inhibits adhesion of endothelial cells to vitronectin, type-I collagen and, to a lower degree, fibronectin and laminin. The polypeptide is Disintegrin sasaimin (Cerrophidion sasai (Costa Rica montane pitviper)).